The primary structure comprises 785 residues: MGSDWDEIKRLAADFQKAQLTSTLQKLSERNCVEIVTLLLEKQLLEVVFTNNGKEYITPDHLEREIQDELYANGGRANLVEVSRTLNVDLSRIVALAERIAAENPLVHLVLGQLIDEDYISHIAQEINEKLALRGEISISDLASQFDLPSEFLQQDVVEKHLGKIIKGRQDATNPRVFFTQAYIQRCKAKIRGALAAITRPTNVAVILQQINVQEKIFHSLLDEISPAGQVTSKLANAQYVPHIYAKTQADWVNSFYKQNSFLEYDAINKLGISDAKSYIRKQFPNEEFLFLKRVALGARLVELTVVTALNECSATKQYLDLTTILPSNLSEEDIEEVFSAIMAQKHSNPSNFVYLDSIVFSQPYLTELVQPCHALAEAQAKAAIDSGVYQQFVVEKTLAQKGNASFQDQDDDGKLDKRDERRKKASSGKAGGGAQGRETKTKSTKKHQRRSAAAQNDSDDEDDVQHQGSRGAGGGGGNKKTVKPLDLVKTADIEKLINASLQEEGLEHLAPSIAALYLNQLNQAALAKAQELYEATPQTNRRQTHAAIQDRINTLLIDIRLYEKGLKLFSHDTQTQLVKYLLKSLGNDICNELSLYVASECNLTVKNTSLNVDQRIKLAQECDAEYRSALLEQNKALNKSIDDFELATESVLKACSMIIKKVDKKKDRLLIADHKNKLQQQLLDCQEPALLLHLAALILFTTISGCILHASGKFVSAILQHIRGSLSDQQNDMLLRYHDLVLQVLQTAPESDDSKIAHEQLQIMQSKVVELAQNYTRASVSKAD.

A disordered region spans residues 405 to 483 (ASFQDQDDDG…GGGGGNKKTV (79 aa)).

Belongs to the UFL1 family.

In terms of biological role, E3 UFM1-protein ligase that mediates ufmylation of target proteins. In Drosophila pseudoobscura pseudoobscura (Fruit fly), this protein is E3 UFM1-protein ligase 1 homolog.